The primary structure comprises 365 residues: Chorismate synthase (365 aa).

The NADP(+) site is built by R48 and R54. FMN is bound by residues 131–133 (RSS), 243–244 (NA), G288, 303–307 (KPTSS), and R329.

This sequence belongs to the chorismate synthase family. In terms of assembly, homotetramer. Requires FMNH2 as cofactor.

The catalysed reaction is 5-O-(1-carboxyvinyl)-3-phosphoshikimate = chorismate + phosphate. Its pathway is metabolic intermediate biosynthesis; chorismate biosynthesis; chorismate from D-erythrose 4-phosphate and phosphoenolpyruvate: step 7/7. Catalyzes the anti-1,4-elimination of the C-3 phosphate and the C-6 proR hydrogen from 5-enolpyruvylshikimate-3-phosphate (EPSP) to yield chorismate, which is the branch point compound that serves as the starting substrate for the three terminal pathways of aromatic amino acid biosynthesis. This reaction introduces a second double bond into the aromatic ring system. This chain is Chorismate synthase, found in Rhizobium etli (strain ATCC 51251 / DSM 11541 / JCM 21823 / NBRC 15573 / CFN 42).